Reading from the N-terminus, the 172-residue chain is Podoplanin (172 aa).

The first 22 residues, 1–22, serve as a signal peptide directing secretion; the sequence is MWTVPVLFWVLGSVWFWDSAQG. Residues 23-141 lie on the Extracellular side of the membrane; the sequence is GTIGVNEDDI…KKDGLPVVTL (119 aa). O-linked (GalNAc...) threonine glycosylation is found at T37, T51, T52, T53, and T56. Positions 49–132 are disordered; the sequence is KITTTGATGG…AGDETQTTDK (84 aa). The segment covering 51–63 has biased composition (polar residues); sequence TTTGATGGLNEST. N60 carries an N-linked (GlcNAc...) asparagine glycan. O-linked (GalNAc...) threonine glycosylation is found at T63, T71, and T77. The span at 72–81 shows a compositional bias: basic and acidic residues; sequence QRERGTKPPL. An O-linked (GalNAc...) serine glycan is attached at S85. A glycan (O-linked (GalNAc...) threonine) is linked at T86. The O-linked (GalNAc...) serine glycan is linked to S87. T89 carries O-linked (GalNAc...) threonine glycosylation. A glycan (O-linked (GalNAc...) serine) is linked at S90. Positions 90–99 are enriched in basic and acidic residues; sequence SDHDHREHES. Residues T100, T101, T102, T107, and T115 are each glycosylated (O-linked (GalNAc...) threonine). Residues 100 to 109 are compositionally biased toward low complexity; the sequence is TTTVKVVTSH. Residues 110-132 show a composition bias toward basic and acidic residues; that stretch reads SVDKKTSHPNRDNAGDETQTTDK. Residues 142–162 form a helical membrane-spanning segment; the sequence is VGIIVGVLLAIGFVGGIFIVV. The requires for dimerization and lipidd rafts association stretch occupies residues 143–147; it reads GIIVG. The Cytoplasmic portion of the chain corresponds to 163-172; sequence MKKISGRFSP. The interval 164–165 is requires for interaction with MSN and EZR; the sequence is KK.

It belongs to the podoplanin family. As to quaternary structure, homodimer. Interacts with CLEC1B; the interaction is independent of CLEC1B glycosylation and activates CLEC1B; the interaction is dependent of sialic acid on O-glycans. Interacts with CD9; this interaction is homophilic and attenuates platelet aggregation and pulmonary metastasis induced by PDPN. Interacts with LGALS8; the interaction is glycosylation-dependent; may participate in connection of the lymphatic endothelium to the surrounding extracellular matrix. Interacts with HSPA9. Interacts (via extracellular domain) with CD44; this interaction is required for PDPN-mediated directional migration and regulation of lamellipodia extension/stabilization during cell spreading and migration. Interacts (via cytoplasmic domain) with MSN and EZR; activates RHOA and promotes epithelial-mesenchymal transition. Interacts with CCL21; relocalized PDPN to the basolateral membrane. In terms of processing, extensively O-glycosylated. Contains sialic acid residues. O-glycosylation is necessary for platelet aggregation activity. Disialylated at Thr-52; sialic acid is critical for platelet-aggregating activity and for CLEC1B interaction. Phosphorylated by PKA; decreases cell migration. Post-translationally, the N-terminus is blocked. As to expression, detected at high levels in lung and brain, at lower levels in kidney, stomach, liver, spleen and esophagus, and not detected in skin and small intestine. Expressed in epithelial cells of choroid plexus, ependyma, glomerulus and alveolus, in mesothelial cells and in endothelia of lymphatic vessels. Also expressed in stromal cells of peripheral lymphoid tissue and thymic epithelial cells. Detected in carcinoma cell lines and cultured fibroblasts. Expressed at higher levels in colon carcinomas than in normal colon tissue.

Its subcellular location is the membrane. The protein resides in the cell projection. The protein localises to the lamellipodium membrane. It is found in the filopodium membrane. It localises to the microvillus membrane. Its subcellular location is the ruffle membrane. The protein resides in the membrane raft. The protein localises to the apical cell membrane. It is found in the basolateral cell membrane. It localises to the invadopodium. Its function is as follows. Mediates effects on cell migration and adhesion through its different partners. During development plays a role in blood and lymphatic vessels separation by binding CLEC1B, triggering CLEC1B activation in platelets and leading to platelet activation and/or aggregation. Interaction with CD9, on the contrary, attenuates platelet aggregation and pulmonary metastasis induced by PDPN. Mediates effects on cell migration and adhesion through its different partners. Through MSN or EZR interaction promotes epithelial-mesenchymal transition (EMT) leading to ERZ phosphorylation and triggering RHOA activation leading to cell migration increase and invasiveness. Interaction with CD44 promotes directional cell migration in epithelial and tumor cells. In lymph nodes (LNs), controls fibroblastic reticular cells (FRCs) adhesion to the extracellular matrix (ECM) and contraction of the actomyosin by maintaining ERM proteins (EZR; MSN and RDX) and MYL9 activation through association with unknown transmembrane proteins. Engagement of CLEC1B by PDPN promotes FRCs relaxation by blocking lateral membrane interactions leading to reduction of ERM proteins (EZR; MSN and RDX) and MYL9 activation. Through binding with LGALS8 may participate in connection of the lymphatic endothelium to the surrounding extracellular matrix. In keratinocytes, induces changes in cell morphology showing an elongated shape, numerous membrane protrusions, major reorganization of the actin cytoskeleton, increased motility and decreased cell adhesion. Controls invadopodia stability and maturation leading to efficient degradation of the extracellular matrix (ECM) in tumor cells through modulation of RHOC activity in order to activate ROCK1/ROCK2 and LIMK1/LIMK2 and inactivation of CFL1. Required for normal lung cell proliferation and alveolus formation at birth. Does not function as a water channel or as a regulator of aquaporin-type water channels. Does not have any effect on folic acid or amino acid transport. The sequence is that of Podoplanin from Mus musculus (Mouse).